Consider the following 440-residue polypeptide: Probable exopolygalacturonase C (440 aa).

Positions 1–21 are cleaved as a signal peptide; it reads MLITNPALLGILASLVPLALG. N-linked (GlcNAc...) asparagine glycans are attached at residues asparagine 84 and asparagine 151. PbH1 repeat units lie at residues 188 to 210, 217 to 238, and 240 to 261; these read GDDITVSHAIVDATSTGGFPFNT, GTNISITDSVMFNGDDAIAVNT, and SHNIVFARNTIGYQSHGMSIGS. Asparagine 219 is a glycosylation site (N-linked (GlcNAc...) asparagine). Aspartate 231 serves as the catalytic Proton donor. The active site involves histidine 255. Asparagine 271 is a glycosylation site (N-linked (GlcNAc...) asparagine). A PbH1 4 repeat occupies 272 to 293; it reads ITNLRFEDVTVIDALYAARFKS. An N-linked (GlcNAc...) asparagine glycan is attached at asparagine 313. Cysteine 389 and cysteine 395 are disulfide-bonded. The N-linked (GlcNAc...) asparagine glycan is linked to asparagine 434.

It belongs to the glycosyl hydrolase 28 family.

It is found in the secreted. The enzyme catalyses [(1-&gt;4)-alpha-D-galacturonosyl](n) + H2O = alpha-D-galacturonate + [(1-&gt;4)-alpha-D-galacturonosyl](n-1). Functionally, specific in hydrolyzing the terminal glycosidic bond of polygalacturonic acid and oligogalacturonates. This Aspergillus fumigatus (strain ATCC MYA-4609 / CBS 101355 / FGSC A1100 / Af293) (Neosartorya fumigata) protein is Probable exopolygalacturonase C (pgxC).